The primary structure comprises 210 residues: LexA repressor (210 aa).

The segment at residues 31 to 51 is a DNA-binding region (H-T-H motif); sequence RAEISRELGFRSPNAAEEHLK. Active-site for autocatalytic cleavage activity residues include Ser-126 and Lys-163.

The protein belongs to the peptidase S24 family. As to quaternary structure, homodimer.

It carries out the reaction Hydrolysis of Ala-|-Gly bond in repressor LexA.. In terms of biological role, represses a number of genes involved in the response to DNA damage (SOS response), including recA and lexA. In the presence of single-stranded DNA, RecA interacts with LexA causing an autocatalytic cleavage which disrupts the DNA-binding part of LexA, leading to derepression of the SOS regulon and eventually DNA repair. The polypeptide is LexA repressor (Actinobacillus succinogenes (strain ATCC 55618 / DSM 22257 / CCUG 43843 / 130Z)).